The sequence spans 251 residues: MGRSRSRSSSRSKHSKHSRKRSRSKSKSKKRSRSKEPKRNRRSRSRSGSRRDRGGSPPDRTDMFGRTLSKRNNDEKQKREEEDRRVEIERQRKIRQQEIEERLIEEETARRVEELVARRVEEELEKRRDEIEHEVLRRVEEAKRIMEAQLLQELERQRQAELNAQKAREEEEKSKRVELERILEENNRKIADAQAKLAEDQLRIVEEQRKIHEERMKLEQERQKQQKEEQKMILGKGKSRPRLSFSLKATE.

Basic residues predominate over residues 1–48 (MGRSRSRSSSRSKHSKHSRKRSRSKSKSKKRSRSKEPKRNRRSRSRSG). Residues 1–53 (MGRSRSRSSSRSKHSKHSRKRSRSKSKSKKRSRSKEPKRNRRSRSRSGSRRDR) are necessary and sufficient for RNA binding. Disordered stretches follow at residues 1–92 (MGRS…ERQR) and 215–251 (RMKLEQERQKQQKEEQKMILGKGKSRPRLSFSLKATE). 3 stretches are compositionally biased toward basic and acidic residues: residues 49–63 (SRRDRGGSPPDRTDM), 71–92 (RNNDEKQKREEEDRRVEIERQR), and 215–231 (RMKLEQERQKQQKEEQK). Residues 54-251 (GGSPPDRTDM…RLSFSLKATE (198 aa)) form a necessary and sufficient for transcriptional regulation region.

It belongs to the ARGLU1 family.

It is found in the nucleus. It localises to the nucleus speckle. The protein resides in the chromosome. Its function is as follows. Dual function regulator of gene expression; regulator of transcription and modulator of alternative splicing. General coactivator of nuclear receptor-induced gene expression. The protein is Arginine and glutamate-rich protein 1-A (arglu1a) of Danio rerio (Zebrafish).